The following is a 145-amino-acid chain: uncharacterized protein (145 aa).

It to R.meliloti R00649.

This is an uncharacterized protein from Agrobacterium fabrum (strain C58 / ATCC 33970) (Agrobacterium tumefaciens (strain C58)).